A 1354-amino-acid chain; its full sequence is Tensin homolog (1354 aa).

One can recognise a Phosphatase tensin-type domain in the interval 38 to 207 (MKDRKEGVQV…GYFSSLLSGR (170 aa)). Residue cysteine 144 is the Phosphocysteine intermediate of the active site. In terms of domain architecture, C2 tensin-type spans 212–337 (SDPLYLHNII…VTVELVVSHT (126 aa)). 7 disordered regions span residues 380-442 (EYSE…DVVP), 597-616 (STLQ…RTLN), 638-660 (SNTA…SVQL), 692-720 (DVRG…NNTP), 734-754 (SVTT…EADA), 794-879 (AANN…DRQR), and 1015-1035 (NGER…HNGY). The span at 391 to 401 (SSKSANPINNN) shows a compositional bias: polar residues. Residues 408–417 (VGPPVPPKPS) are compositionally biased toward pro residues. Polar residues-rich tracts occupy residues 704–720 (HNAS…NNTP), 734–747 (SVTT…STPS), and 794–804 (AANNDENQHNL). The span at 821–843 (AEFRREEERLRNTRSPYGEERWR) shows a compositional bias: basic and acidic residues. Residues 1017–1033 (ERGGSGHAAGGGGGGHN) are compositionally biased toward gly residues. Residues 1083–1187 (WYKPTISREQ…ALPTKLVLPD (105 aa)) enclose the SH2 domain. Residues 1209 to 1353 (ACNVVYVGSV…NKVMLAQKNR (145 aa)) form the PTB domain.

Belongs to the PTEN phosphatase protein family. In terms of assembly, may interact (via SH2 domain) with receptor svh-2 (when tyrosine-phosphorylated). May interact (via C-terminus) with integrin pat-3. In terms of tissue distribution, expressed in ventral motor neurons, including ventral and dorsal D-type neurons, and in a subset of cells in the head.

The protein localises to the cell projection. The protein resides in the axon. The enzyme catalyses O-phospho-L-tyrosyl-[protein] + H2O = L-tyrosyl-[protein] + phosphate. In terms of biological role, probable phosphatase which regulates axon regeneration after injury by linking the svh-2 and integrin signaling pathways. Functionally, not involved in axon regeneration after injury. The chain is Tensin homolog from Caenorhabditis elegans.